A 320-amino-acid polypeptide reads, in one-letter code: Beta-ketoacyl-[acyl-carrier-protein] synthase III (320 aa).

Residues cysteine 112 and histidine 245 contribute to the active site. The interval 246 to 250 (QANIR) is ACP-binding. Residue asparagine 275 is part of the active site.

The protein belongs to the thiolase-like superfamily. FabH family. As to quaternary structure, homodimer.

The protein localises to the cytoplasm. It catalyses the reaction malonyl-[ACP] + acetyl-CoA + H(+) = 3-oxobutanoyl-[ACP] + CO2 + CoA. Its pathway is lipid metabolism; fatty acid biosynthesis. Catalyzes the condensation reaction of fatty acid synthesis by the addition to an acyl acceptor of two carbons from malonyl-ACP. Catalyzes the first condensation reaction which initiates fatty acid synthesis and may therefore play a role in governing the total rate of fatty acid production. Possesses both acetoacetyl-ACP synthase and acetyl transacylase activities. Its substrate specificity determines the biosynthesis of branched-chain and/or straight-chain of fatty acids. This Streptococcus thermophilus (strain CNRZ 1066) protein is Beta-ketoacyl-[acyl-carrier-protein] synthase III.